A 352-amino-acid polypeptide reads, in one-letter code: Type II restriction enzyme HaeII (352 aa).

The enzyme catalyses Endonucleolytic cleavage of DNA to give specific double-stranded fragments with terminal 5'-phosphates.. Functionally, a P subtype restriction enzyme that recognizes the double-stranded sequence 5'-RGCGCY-3' and cleaves after C-5. This chain is Type II restriction enzyme HaeII (haeIIR), found in Haemophilus aegyptius.